We begin with the raw amino-acid sequence, 289 residues long: Oxaloacetate decarboxylase (289 aa).

Serine 47 is a substrate binding site. Aspartate 85 lines the Mg(2+) pocket. Substrate contacts are provided by arginine 156 and histidine 232.

This sequence belongs to the isocitrate lyase/PEP mutase superfamily. Oxaloacetate decarboxylase family. In terms of assembly, homotetramer; dimer of dimers. It depends on Mg(2+) as a cofactor.

It catalyses the reaction oxaloacetate + H(+) = pyruvate + CO2. Catalyzes the decarboxylation of oxaloacetate into pyruvate. Seems to play a role in maintaining cellular concentrations of bicarbonate and pyruvate. This chain is Oxaloacetate decarboxylase, found in Rhodopseudomonas palustris (strain HaA2).